A 407-amino-acid chain; its full sequence is Phosphopentomutase (407 aa).

The Mn(2+) site is built by D10, D306, H311, D347, H348, and H359.

Belongs to the phosphopentomutase family. Mn(2+) is required as a cofactor.

The protein resides in the cytoplasm. It carries out the reaction 2-deoxy-alpha-D-ribose 1-phosphate = 2-deoxy-D-ribose 5-phosphate. The catalysed reaction is alpha-D-ribose 1-phosphate = D-ribose 5-phosphate. The protein operates within carbohydrate degradation; 2-deoxy-D-ribose 1-phosphate degradation; D-glyceraldehyde 3-phosphate and acetaldehyde from 2-deoxy-alpha-D-ribose 1-phosphate: step 1/2. Its function is as follows. Isomerase that catalyzes the conversion of deoxy-ribose 1-phosphate (dRib-1-P) and ribose 1-phosphate (Rib-1-P) to deoxy-ribose 5-phosphate (dRib-5-P) and ribose 5-phosphate (Rib-5-P), respectively. The chain is Phosphopentomutase from Cronobacter sakazakii (strain ATCC BAA-894) (Enterobacter sakazakii).